A 430-amino-acid chain; its full sequence is Adenylosuccinate synthetase (430 aa).

GTP-binding positions include 12–18 (GDEGKGK) and 40–42 (GHT). Asp13 serves as the catalytic Proton acceptor. Asp13 and Gly40 together coordinate Mg(2+). Residues 13–16 (DEGK), 38–41 (NAGH), Thr128, Arg142, Gln223, Thr238, and Arg302 each bind IMP. His41 functions as the Proton donor in the catalytic mechanism. 298–304 (TTTGRPR) lines the substrate pocket. Residues Arg304, 330 to 332 (SID), and 412 to 414 (SVG) each bind GTP.

The protein belongs to the adenylosuccinate synthetase family. Homodimer. Mg(2+) is required as a cofactor.

Its subcellular location is the cytoplasm. The enzyme catalyses IMP + L-aspartate + GTP = N(6)-(1,2-dicarboxyethyl)-AMP + GDP + phosphate + 2 H(+). It functions in the pathway purine metabolism; AMP biosynthesis via de novo pathway; AMP from IMP: step 1/2. Plays an important role in the de novo pathway of purine nucleotide biosynthesis. Catalyzes the first committed step in the biosynthesis of AMP from IMP. The chain is Adenylosuccinate synthetase from Streptococcus pyogenes serotype M3 (strain ATCC BAA-595 / MGAS315).